The sequence spans 230 residues: Protein tumorous testis (230 aa).

The region spanning 37 to 128 (GELFLSCIPR…RELVLKNVES (92 aa)) is the RRM domain.

As to quaternary structure, part of a complex composed of at least tut, bam and bgcn; complex formation does not require RNA. Interacts with bam (via N-terminus); the interaction is direct. Interacts with bgcn; the interaction is indirect and is mediated by bam. As part of the bam-bgcn-tut complex associates with twin; may recruit the CCR4-NOT1 deadenylation complex to mRNA 3'UTRs to mediate post-transcriptional regulation of expression.

It is found in the cytoplasm. In terms of biological role, RNA binding protein that forms a complex with bam and bgcn, involved in 3'UTR-dependent regulation of a subset of mRNAs. Preferentially binds a long isoform of mei-P26 transcripts. Involved in 3'UTR-dependent post-transcriptional repression of several 3'-RNA processing factors. Involved in promoting germline stem cell lineage differentiation and mitosis-to-meiosis transition. Required for proper transit amplification of spermatogonia. This chain is Protein tumorous testis, found in Drosophila melanogaster (Fruit fly).